The chain runs to 47 residues: PhoP/PhoQ regulator MgrB (47 aa).

The helical transmembrane segment at 6-26 (WVILIIVLIACVILWTQTINV) threads the bilayer.

It belongs to the MgrB family. As to quaternary structure, may form homooligomers. Probably interacts with the periplasmic domain of PhoQ.

Its subcellular location is the cell inner membrane. PhoP-regulated transcription is redox-sensitive, being activated when the periplasm becomes more reducing. MgrB acts between DsbA/DsbB and PhoP/PhoQ in this pathway. Represses PhoP/PhoQ signaling, possibly by binding to the periplasmic domain of PhoQ, altering its activity and that of downstream effector PhoP. This chain is PhoP/PhoQ regulator MgrB, found in Enterobacter sp. (strain 638).